Here is a 190-residue protein sequence, read N- to C-terminus: Potassium-transporting ATPase KdpC subunit (190 aa).

The chain crosses the membrane as a helical span at residues 11 to 31 (LIVLMSLITGVAYPLVVTGVA).

The protein belongs to the KdpC family. The system is composed of three essential subunits: KdpA, KdpB and KdpC.

The protein resides in the cell inner membrane. In terms of biological role, part of the high-affinity ATP-driven potassium transport (or Kdp) system, which catalyzes the hydrolysis of ATP coupled with the electrogenic transport of potassium into the cytoplasm. This subunit acts as a catalytic chaperone that increases the ATP-binding affinity of the ATP-hydrolyzing subunit KdpB by the formation of a transient KdpB/KdpC/ATP ternary complex. This Pseudomonas savastanoi pv. phaseolicola (strain 1448A / Race 6) (Pseudomonas syringae pv. phaseolicola (strain 1448A / Race 6)) protein is Potassium-transporting ATPase KdpC subunit.